A 564-amino-acid polypeptide reads, in one-letter code: NADPH oxidase 1 (564 aa).

Topologically, residues 1–9 (MGNWVVNHW) are cytoplasmic. Residues 10–30 (FSVLFLVVWLGLNVFLFVDAF) form a helical membrane-spanning segment. The Extracellular portion of the chain corresponds to 31–44 (LKYEKADKYYYTRK). The helical transmembrane segment at 45-72 (ILGSTLACARASALCLNFNSTLILLPVC) threads the bilayer. The Ferric oxidoreductase domain occupies 54 to 283 (RASALCLNFN…LAPVILYICE (230 aa)). The Cytoplasmic segment spans residues 73–102 (RNLLSFLRGTCSFCSRTLRKQLDHNLTFHK). Heme-binding residues include His101 and His115. Residues 103–123 (LVAYMICLHTAIHIIAHLFNF) traverse the membrane as a helical segment. Topologically, residues 124-168 (DCYSRSRQATDGSLASILSSLSHDEKKGGSWLNPIQSRNTTVEYV) are extracellular. Asn162 is a glycosylation site (N-linked (GlcNAc...) asparagine). Residues 169–189 (TFTSIAGLTGVIMTIALILMV) traverse the membrane as a helical segment. Over 190-206 (TSATEFIRRSYFEVFWY) the chain is Cytoplasmic. A helical transmembrane segment spans residues 207–227 (THHLFIFYILGLGIHGIGGIV). Positions 209 and 221 each coordinate heme. Residues 228–396 (RGQTEESMNE…TASEDVFQYE (169 aa)) are Extracellular-facing. An N-linked (GlcNAc...) asparagine glycan is attached at Asn236. The region spanning 284–391 (RILRFYRSQQ…DGPFGTASED (108 aa)) is the FAD-binding FR-type domain. 338–344 (HPFTLTS) provides a ligand contact to FAD. The chain crosses the membrane as a helical span at residues 397–417 (VAVLVGAGIGVTPFASILKSI). Residues 397 to 536 (VAVLVGAGIG…GVFLCGPRTL (140 aa)) are interaction with NOXO1. Topologically, residues 418-564 (WYKFQCADHN…VQFYFNKENF (147 aa)) are cytoplasmic. Thr430 bears the Phosphothreonine mark.

In terms of assembly, NOX1, NOXA1, NOXO1, RAC1 and CYBA forms a functional multimeric complex supporting reactive oxygen species (ROS) production. Interacts with NOXO1. Interacts (via FAD-binding FR-type domain) with ARHGEF7 (via PH domain). The phosphorylated form at Thr-430 interacts with NOXA1 with greater affinity. FAD serves as cofactor. Phosphorylation at Thr-430 mediated by PKC/PRKBC positively regulates its interaction with NOXA1 and enzyme activity. As to expression, detected in colon, uterus, prostate, and colon carcinoma, but not in peripheral blood leukocytes.

The protein resides in the cell projection. Its subcellular location is the invadopodium membrane. The protein localises to the cell membrane. It catalyses the reaction NADPH + 2 O2 = 2 superoxide + NADP(+) + H(+). Its activity is regulated as follows. The oxidase activity is potentiated by NOXA1, NOXO1 and RAC1. In terms of biological role, NADPH oxidase that catalyzes the generation of superoxide from molecular oxygen utilizing NADPH as an electron donor. The polypeptide is NADPH oxidase 1 (Homo sapiens (Human)).